Here is a 475-residue protein sequence, read N- to C-terminus: RNA pseudouridine synthase 3, mitochondrial (475 aa).

Residues 1-15 (MLCRRRRVGAAVRWL) constitute a mitochondrion transit peptide. Residues 40 to 74 (RLGKPKPGPRPRQLLSLPPFPGGGDGDPLPGRKAA) form a disordered region. The region spanning 90–160 (ADVPQEVVQA…GEIKKRYETI (71 aa)) is the S4 RNA-binding domain. Aspartate 230 is a catalytic residue.

The protein belongs to the pseudouridine synthase RluA family.

The protein resides in the mitochondrion. The catalysed reaction is a uridine in RNA = a pseudouridine in RNA. In Oryza sativa subsp. japonica (Rice), this protein is RNA pseudouridine synthase 3, mitochondrial.